Consider the following 267-residue polypeptide: NAD kinase 2 (267 aa).

The active-site Proton acceptor is the Asp52. Residues 52-53, 124-125, Arg151, Asp153, 164-169, and Ala188 each bind NAD(+); these read DG, NE, and TGYNKS.

The protein belongs to the NAD kinase family. The cofactor is a divalent metal cation.

The protein resides in the cytoplasm. The enzyme catalyses NAD(+) + ATP = ADP + NADP(+) + H(+). Functionally, involved in the regulation of the intracellular balance of NAD and NADP, and is a key enzyme in the biosynthesis of NADP. Catalyzes specifically the phosphorylation on 2'-hydroxyl of the adenosine moiety of NAD to yield NADP. The protein is NAD kinase 2 of Geobacillus kaustophilus (strain HTA426).